The chain runs to 241 residues: Tubulin-like protein alpha-4B (241 aa).

Positions 1 to 10 are enriched in basic and acidic residues; the sequence is MRHQQTERQD. Residues 1–20 are disordered; that stretch reads MRHQQTERQDPSQPLSRQHG. Asp10 is a binding site for GTP. Asp10 serves as a coordination point for Mg(2+). A compositionally biased stretch (polar residues) spans 11-20; sequence PSQPLSRQHG. GTP is bound by residues Ser79, Gly83, Thr84, Thr118, Asn145, and Asn167. Glu193 is an active-site residue.

The protein belongs to the tubulin family. Mg(2+) serves as cofactor. In terms of processing, some glutamate residues at the C-terminus are polyglutamylated, resulting in polyglutamate chains on the gamma-carboxyl group. Polyglutamylation plays a key role in microtubule severing by spastin (SPAST). SPAST preferentially recognizes and acts on microtubules decorated with short polyglutamate tails: severing activity by SPAST increases as the number of glutamates per tubulin rises from one to eight, but decreases beyond this glutamylation threshold. Glutamylation is also involved in cilia motility. Some glutamate residues at the C-terminus are monoglycylated but not polyglycylated due to the absence of functional TTLL10 in human. Monoglycylation is mainly limited to tubulin incorporated into cilia and flagella axonemes, which is required for their stability and maintenance. Flagella glycylation controls sperm motility. Both polyglutamylation and monoglycylation can coexist on the same protein on adjacent residues, and lowering glycylation levels increases polyglutamylation, and reciprocally.

The protein localises to the cytoplasm. The protein resides in the cytoskeleton. It carries out the reaction GTP + H2O = GDP + phosphate + H(+). Functionally, tubulin is the major constituent of microtubules, a cylinder consisting of laterally associated linear protofilaments composed ofalpha- and beta-tubulin heterodimers. In Homo sapiens (Human), this protein is Tubulin-like protein alpha-4B (TUBA4B).